The chain runs to 273 residues: Probable NAD(P)H dehydrogenase (quinone) FQR1-like 2 (273 aa).

The segment at 1 to 60 (MGKGGGCVPSKKKKPATTGDGPGIDDDNDATNAPIQIDDDQTTIDGDRTTATNTGGTTTP) is disordered. Residues 49-60 (TTATNTGGTTTP) are compositionally biased toward low complexity. Positions 75–263 (IFVVFYSMYG…ALAEHQGNYM (189 aa)) constitute a Flavodoxin-like domain. Residues 81–85 (SMYGH), 183–236 (FFVS…SPYG), and His207 contribute to the FMN site. NAD(+) is bound at residue Tyr83.

It belongs to the WrbA family. Requires FMN as cofactor.

The protein resides in the cell membrane. It catalyses the reaction a quinone + NADH + H(+) = a quinol + NAD(+). It carries out the reaction a quinone + NADPH + H(+) = a quinol + NADP(+). Functionally, catalyzes the transfer of electrons from NADH and NADPH to reduce quinone to the hydroquinone state. The protein is Probable NAD(P)H dehydrogenase (quinone) FQR1-like 2 of Arabidopsis thaliana (Mouse-ear cress).